A 937-amino-acid chain; its full sequence is MSQPIPSASPALAALIERAVARVRHALPADAPWPEGVEHPLARVALASDFVVDTLARQPALLAHLAQPDPPPLPVPRLDPAQPQEWAAQLRRYRAAASARLVWRDVLGLDDVDATLAGATTLAETCLQCALQALEQQFSTRHGQVIAEDGSVQRLVVFGLGKLGGGELNFSSDVDLVYAYPQAGQSDGARPLAAEEYFARLGQQLARLLDETTADGFSHRVDLRLRPFGSAGRVALSFNGMDQYFQREGRDWERYAWLKARAVAGDIAAGEAWLETLRPFVYRRYLDFTALDGLRDMKAAITAEVAHHARLDDIKRGPGGIREIEFLAQSLQLIRGGREASLRERRLLPALQALVDLGQIDPPTGQALADAYRFLRRVENRLQMLRDAQTHALPQGEPERERIALGLGYAHWQALLEALAPHRTRVAAEFAELLAPRVHATAPDTLADYWRALPEGDAAPLLGIGLHDPNNAHHMLADFAQSSGVRALSDGARTRLDRVMPALLHAAIRATQPDAALRRVLGLLQATLRRTSYLALLDEQPSALARLVDVLSRSALLAERLAAYPLLLDELLDTRISGPLPDRAALHTACVDTLQIDDTEAALRELNERRLALSFRIALATLDGRQQPVDSTQQLAWLAEAVVQTVLQLARRELVAAHGQVPGGAFAIIGYGSLGGLELGFGSDLDLVFLYDHPREVEASDGKRPLEAGRWFARLAQKVMTLLGAETGAGRLYDIDVRLRPDGGKGALVSSLASYRDYQRDRAWTWEHQALVRARAVAGDAALCEAFVQVRRETLTRVRDPALLHEDVRKMRARMRSELDRSDAGRLDLKQGAGGLVDLEFLLQAGVLGQAAQHPALLLACATPALIDALVQVQWLPAESAAPLHHAHATLVEAGLSCTLDRRPRLVVSTPPIRDACQIVAAIADAQQLRFQPGKGA.

The tract at residues 1–436 (MSQPIPSASP…AAEFAELLAP (436 aa)) is adenylyl removase. The interval 443–937 (PDTLADYWRA…QLRFQPGKGA (495 aa)) is adenylyl transferase.

Belongs to the GlnE family. Mg(2+) is required as a cofactor.

The enzyme catalyses [glutamine synthetase]-O(4)-(5'-adenylyl)-L-tyrosine + phosphate = [glutamine synthetase]-L-tyrosine + ADP. The catalysed reaction is [glutamine synthetase]-L-tyrosine + ATP = [glutamine synthetase]-O(4)-(5'-adenylyl)-L-tyrosine + diphosphate. Functionally, involved in the regulation of glutamine synthetase GlnA, a key enzyme in the process to assimilate ammonia. When cellular nitrogen levels are high, the C-terminal adenylyl transferase (AT) inactivates GlnA by covalent transfer of an adenylyl group from ATP to specific tyrosine residue of GlnA, thus reducing its activity. Conversely, when nitrogen levels are low, the N-terminal adenylyl removase (AR) activates GlnA by removing the adenylyl group by phosphorolysis, increasing its activity. The regulatory region of GlnE binds the signal transduction protein PII (GlnB) which indicates the nitrogen status of the cell. The sequence is that of Bifunctional glutamine synthetase adenylyltransferase/adenylyl-removing enzyme from Xanthomonas campestris pv. campestris (strain ATCC 33913 / DSM 3586 / NCPPB 528 / LMG 568 / P 25).